We begin with the raw amino-acid sequence, 332 residues long: MSRILDNEMMGDEELVERTLRPQYLREYIGQDKVKDQLQIFIEAAKMRDEALDHVLLFGPPGLGKTTMAFVIANELGVNLKQTSGPVIEKAGDLVAILNDLEPGDVLFIDEIHRLPMSVEEVLYSAMEDFYIDIMIGAGEGSRSVHLELPPFTLIGATTRAGMLSNPLRARFGITGHMEYYAHADLTEIVERTADIFEMEITHEAASELALRSRGTPRIANRLLKRVRDFAQIMGNGVIDDVITDKALTMLDVDHEGLDYVDQKILRTMIEMYSGGPVGLGTLSVNIAEERETVEDMYEPYLIQKGFIMRTRSGRVATAKAYEHLGYEYSEK.

Residues 1–181 (MSRILDNEMM…FGITGHMEYY (181 aa)) are large ATPase domain (RuvB-L). ATP contacts are provided by residues Leu20, Arg21, Gly62, Lys65, Thr66, Thr67, 128-130 (EDF), Arg171, Tyr181, and Arg218. Thr66 serves as a coordination point for Mg(2+). A small ATPAse domain (RuvB-S) region spans residues 182–252 (AHADLTEIVE…ITDKALTMLD (71 aa)). The segment at 255-332 (HEGLDYVDQK…EHLGYEYSEK (78 aa)) is head domain (RuvB-H). Residues Arg291, Arg310, Arg312, and Arg315 each coordinate DNA.

Belongs to the RuvB family. As to quaternary structure, homohexamer. Forms an RuvA(8)-RuvB(12)-Holliday junction (HJ) complex. HJ DNA is sandwiched between 2 RuvA tetramers; dsDNA enters through RuvA and exits via RuvB. An RuvB hexamer assembles on each DNA strand where it exits the tetramer. Each RuvB hexamer is contacted by two RuvA subunits (via domain III) on 2 adjacent RuvB subunits; this complex drives branch migration. In the full resolvosome a probable DNA-RuvA(4)-RuvB(12)-RuvC(2) complex forms which resolves the HJ.

Its subcellular location is the cytoplasm. It carries out the reaction ATP + H2O = ADP + phosphate + H(+). Functionally, the RuvA-RuvB-RuvC complex processes Holliday junction (HJ) DNA during genetic recombination and DNA repair, while the RuvA-RuvB complex plays an important role in the rescue of blocked DNA replication forks via replication fork reversal (RFR). RuvA specifically binds to HJ cruciform DNA, conferring on it an open structure. The RuvB hexamer acts as an ATP-dependent pump, pulling dsDNA into and through the RuvAB complex. RuvB forms 2 homohexamers on either side of HJ DNA bound by 1 or 2 RuvA tetramers; 4 subunits per hexamer contact DNA at a time. Coordinated motions by a converter formed by DNA-disengaged RuvB subunits stimulates ATP hydrolysis and nucleotide exchange. Immobilization of the converter enables RuvB to convert the ATP-contained energy into a lever motion, pulling 2 nucleotides of DNA out of the RuvA tetramer per ATP hydrolyzed, thus driving DNA branch migration. The RuvB motors rotate together with the DNA substrate, which together with the progressing nucleotide cycle form the mechanistic basis for DNA recombination by continuous HJ branch migration. Branch migration allows RuvC to scan DNA until it finds its consensus sequence, where it cleaves and resolves cruciform DNA. The protein is Holliday junction branch migration complex subunit RuvB of Streptococcus pneumoniae serotype 4 (strain ATCC BAA-334 / TIGR4).